The primary structure comprises 265 residues: uncharacterized protein (265 aa).

The signal sequence occupies residues 1-23 (MNYFRILYCSVLLFFSFFSCTSA). The NodB homology domain occupies 67 to 248 (KEIYLTFDNG…TLKQQGYTFK (182 aa)).

This sequence belongs to the polysaccharide deacetylase family.

This is an uncharacterized protein from Geobacillus stearothermophilus (Bacillus stearothermophilus).